We begin with the raw amino-acid sequence, 193 residues long: UMP-CMP kinase (193 aa).

13 to 18 (GAGKGT) provides a ligand contact to ATP. The NMP stretch occupies residues 33–63 (SAGDLLRDERKKPDSQYGELIESYIRDGKIV). A ribonucleoside 5'-phosphate-binding positions include R39, 61-63 (KIV), and 93-96 (GFPR). Residue N100 participates in CMP binding. The tract at residues 133–143 (ERGKSSGRSDD) is LID. ATP is bound at residue R134. A ribonucleoside 5'-phosphate is bound by residues R140 and R151. K179 serves as a coordination point for ATP.

Belongs to the adenylate kinase family. UMP-CMP kinase subfamily. In terms of assembly, monomer. Requires Mg(2+) as cofactor.

The protein resides in the nucleus. It is found in the cytoplasm. The catalysed reaction is CMP + ATP = CDP + ADP. The enzyme catalyses dCMP + ATP = dCDP + ADP. It catalyses the reaction UMP + ATP = UDP + ADP. It carries out the reaction a 2'-deoxyribonucleoside 5'-diphosphate + ATP = a 2'-deoxyribonucleoside 5'-triphosphate + ADP. The catalysed reaction is a ribonucleoside 5'-diphosphate + ATP = a ribonucleoside 5'-triphosphate + ADP. In terms of biological role, catalyzes the phosphorylation of pyrimidine nucleoside monophosphates at the expense of ATP. Plays an important role in de novo pyrimidine nucleotide biosynthesis. Has preference for UMP and CMP as phosphate acceptors. Also displays broad nucleoside diphosphate kinase activity. The polypeptide is UMP-CMP kinase (cmpk1) (Xenopus laevis (African clawed frog)).